We begin with the raw amino-acid sequence, 89 residues long: UPF0237 protein Cgl1544/cg1742 (89 aa).

The region spanning 4–82 (IMTVTGQDHT…LVIRIQSEAL (79 aa)) is the ACT domain.

The protein belongs to the UPF0237 family.

The chain is UPF0237 protein Cgl1544/cg1742 from Corynebacterium glutamicum (strain ATCC 13032 / DSM 20300 / JCM 1318 / BCRC 11384 / CCUG 27702 / LMG 3730 / NBRC 12168 / NCIMB 10025 / NRRL B-2784 / 534).